Reading from the N-terminus, the 173-residue chain is Superoxide dismutase [Cu-Zn] (173 aa).

Positions 1 to 22 are cleaved as a signal peptide; that stretch reads MNKAKTLLFTALAFGLSHQALA. Residues H67, H69, and H92 each contribute to the Cu cation site. An intrachain disulfide couples C74 to C169. Residues H92, H101, H110, and D113 each contribute to the Zn(2+) site. H147 serves as a coordination point for Cu cation.

It belongs to the Cu-Zn superoxide dismutase family. Homodimer. It depends on Cu cation as a cofactor. The cofactor is Zn(2+).

It localises to the periplasm. It catalyses the reaction 2 superoxide + 2 H(+) = H2O2 + O2. Destroys radicals which are normally produced within the cells and which are toxic to biological systems. This is Superoxide dismutase [Cu-Zn] (sodC) from Photobacterium leiognathi.